A 357-amino-acid polypeptide reads, in one-letter code: EGF-like domain-containing protein 2 (357 aa).

Residues 1-20 (MPPSLSHLFLLSTFASLALC) form the signal peptide. EGF-like domains are found at residues 21–55 (SFYC…FNCG) and 61–93 (ISAA…PTCQ). 6 disulfide bridges follow: C24–C37, C31–C43, C45–C54, C65–C75, C69–C81, and C83–C92.

In terms of tissue distribution, prismatic layer of shell (at protein level). Expressed primarily in the mantle with highest level in the mantle edge and lower level in the mantle pallium.

It is found in the secreted. The polypeptide is EGF-like domain-containing protein 2 (Pinctada maxima (Silver-lipped pearl oyster)).